Reading from the N-terminus, the 232-residue chain is Orotidine 5'-phosphate decarboxylase (232 aa).

Substrate-binding positions include Asp-11, Lys-32, 59–68 (DLKFHDIPNT), Thr-118, Arg-180, Gln-189, Gly-209, and Arg-210. Lys-61 acts as the Proton donor in catalysis.

Belongs to the OMP decarboxylase family. Type 1 subfamily. In terms of assembly, homodimer.

It carries out the reaction orotidine 5'-phosphate + H(+) = UMP + CO2. Its pathway is pyrimidine metabolism; UMP biosynthesis via de novo pathway; UMP from orotate: step 2/2. Catalyzes the decarboxylation of orotidine 5'-monophosphate (OMP) to uridine 5'-monophosphate (UMP). The polypeptide is Orotidine 5'-phosphate decarboxylase (Gloeothece citriformis (strain PCC 7424) (Cyanothece sp. (strain PCC 7424))).